A 265-amino-acid polypeptide reads, in one-letter code: Glutamate 5-kinase (265 aa).

Lys15 contributes to the ATP binding site. Ser55, Asp142, and Asn158 together coordinate substrate. ATP is bound by residues 178-179 (SD) and 220-226 (TGGMVTK).

It belongs to the glutamate 5-kinase family.

The protein resides in the cytoplasm. The catalysed reaction is L-glutamate + ATP = L-glutamyl 5-phosphate + ADP. It participates in amino-acid biosynthesis; L-proline biosynthesis; L-glutamate 5-semialdehyde from L-glutamate: step 1/2. Catalyzes the transfer of a phosphate group to glutamate to form L-glutamate 5-phosphate. In Lactiplantibacillus plantarum (strain ATCC BAA-793 / NCIMB 8826 / WCFS1) (Lactobacillus plantarum), this protein is Glutamate 5-kinase.